The chain runs to 388 residues: MINYMIPKGFLCCGKHVGIKKRKLDLGVVYSEKLCSAAAVFTKNKFCGIPIIVGKENIKDNKLQSIVVTSGVANVATGEEGLKNTYRILNKLSCELNIKSENILPSSTGIIGKQLPIDCIITGINGIKSSLSKYNWEEFNRAIMTTDKELKIKSCKIGDATVLGIAKGSGMIEPNMATMLAYFFTDASIKAVELKGILKRAVDKSFNMISIDHDTSTSDTAAILANGYVGNVNLEVFEKTFTDMCIDMAKDIVRDGEGVSKLIEATVMGCSSFESAKVIAKSIINSPLVKIAIYGSDPNWGRIAMAIGKSFEDDVDPLKIEIAFNSNVIYDKGKIYEENFDCIERYLRDNNECKIQANLNVGDFAATVWGSDFTEDYIRINSYYTKRK.

T145, K167, T178, E257, and N381 together coordinate substrate. T178 (nucleophile) is an active-site residue.

The protein belongs to the ArgJ family. As to quaternary structure, heterotetramer of two alpha and two beta chains.

The protein resides in the cytoplasm. The enzyme catalyses N(2)-acetyl-L-ornithine + L-glutamate = N-acetyl-L-glutamate + L-ornithine. It catalyses the reaction L-glutamate + acetyl-CoA = N-acetyl-L-glutamate + CoA + H(+). The protein operates within amino-acid biosynthesis; L-arginine biosynthesis; L-ornithine and N-acetyl-L-glutamate from L-glutamate and N(2)-acetyl-L-ornithine (cyclic): step 1/1. It functions in the pathway amino-acid biosynthesis; L-arginine biosynthesis; N(2)-acetyl-L-ornithine from L-glutamate: step 1/4. Its function is as follows. Catalyzes two activities which are involved in the cyclic version of arginine biosynthesis: the synthesis of N-acetylglutamate from glutamate and acetyl-CoA as the acetyl donor, and of ornithine by transacetylation between N(2)-acetylornithine and glutamate. The sequence is that of Arginine biosynthesis bifunctional protein ArgJ 2 from Clostridium acetobutylicum (strain ATCC 824 / DSM 792 / JCM 1419 / IAM 19013 / LMG 5710 / NBRC 13948 / NRRL B-527 / VKM B-1787 / 2291 / W).